The chain runs to 112 residues: Colipase (112 aa).

The first 17 residues, 1–17 (MEKILVLLLVALAVVYA), serve as a signal peptide directing secretion. The propeptide at 18–22 (VPDPR) is enterostatin, activation peptide. 5 disulfide bridges follow: Cys-34–Cys-45, Cys-40–Cys-56, Cys-44–Cys-78, Cys-66–Cys-86, and Cys-80–Cys-104.

Belongs to the colipase family. As to quaternary structure, forms a 1:1 stoichiometric complex with pancreatic lipase. Expressed by the pancreas.

The protein localises to the secreted. Colipase is a cofactor of pancreatic lipase. It allows the lipase to anchor itself to the lipid-water interface. Without colipase the enzyme is washed off by bile salts, which have an inhibitory effect on the lipase. In terms of biological role, enterostatin has a biological activity as a satiety signal. In Canis lupus familiaris (Dog), this protein is Colipase (CLPS).